Here is a 182-residue protein sequence, read N- to C-terminus: Large ribosomal subunit protein uL6 (182 aa).

This sequence belongs to the universal ribosomal protein uL6 family. In terms of assembly, part of the 50S ribosomal subunit.

Its function is as follows. This protein binds to the 23S rRNA, and is important in its secondary structure. It is located near the subunit interface in the base of the L7/L12 stalk, and near the tRNA binding site of the peptidyltransferase center. This Dehalococcoides mccartyi (strain ATCC BAA-2266 / KCTC 15142 / 195) (Dehalococcoides ethenogenes (strain 195)) protein is Large ribosomal subunit protein uL6.